The chain runs to 354 residues: Glycine betaine/proline betaine transport system permease protein ProW (354 aa).

Residues methionine 1–threonine 41 form a disordered region. At methionine 1–glutamine 99 the chain is on the cytoplasmic side. Residues alanine 13–threonine 32 are compositionally biased toward low complexity. The helical transmembrane segment at leucine 100–isoleucine 120 threads the bilayer. Serine 121 is a topological domain (periplasmic). The helical transmembrane segment at glycine 122–tryptophan 142 threads the bilayer. Topologically, residues serine 143 to threonine 148 are cytoplasmic. The ABC transmembrane type-1 domain occupies alanine 145 to threonine 324. Residues leucine 149–tryptophan 169 form a helical membrane-spanning segment. Residues leucine 170–proline 198 are Periplasmic-facing. The chain crosses the membrane as a helical span at residues isoleucine 199–leucine 219. The Cytoplasmic portion of the chain corresponds to proline 220–glutamine 270. The chain crosses the membrane as a helical span at residues threonine 271–glycine 291. At glutamine 292–arginine 300 the chain is on the periplasmic side. A helical transmembrane segment spans residues leucine 301–aspartate 321. Residues arginine 322–lysine 354 are Cytoplasmic-facing.

This sequence belongs to the binding-protein-dependent transport system permease family. CysTW subfamily. As to quaternary structure, the complex is composed of two ATP-binding proteins (ProV), two transmembrane proteins (ProW) and a solute-binding protein (ProX).

The protein resides in the cell inner membrane. Its function is as follows. Part of the ProU ABC transporter complex involved in glycine betaine and proline betaine uptake. Probably responsible for the translocation of the substrate across the membrane. The sequence is that of Glycine betaine/proline betaine transport system permease protein ProW from Escherichia coli (strain K12).